The chain runs to 63 residues: Large ribosomal subunit protein uL29 (63 aa).

Belongs to the universal ribosomal protein uL29 family.

The chain is Large ribosomal subunit protein uL29 from Photorhabdus laumondii subsp. laumondii (strain DSM 15139 / CIP 105565 / TT01) (Photorhabdus luminescens subsp. laumondii).